We begin with the raw amino-acid sequence, 473 residues long: 3-isopropylmalate dehydratase large subunit (473 aa).

[4Fe-4S] cluster-binding residues include cysteine 354, cysteine 414, and cysteine 417.

The protein belongs to the aconitase/IPM isomerase family. LeuC type 1 subfamily. In terms of assembly, heterodimer of LeuC and LeuD. It depends on [4Fe-4S] cluster as a cofactor.

It carries out the reaction (2R,3S)-3-isopropylmalate = (2S)-2-isopropylmalate. It functions in the pathway amino-acid biosynthesis; L-leucine biosynthesis; L-leucine from 3-methyl-2-oxobutanoate: step 2/4. In terms of biological role, catalyzes the isomerization between 2-isopropylmalate and 3-isopropylmalate, via the formation of 2-isopropylmaleate. The chain is 3-isopropylmalate dehydratase large subunit from Mycobacterium ulcerans (strain Agy99).